A 619-amino-acid polypeptide reads, in one-letter code: Long-chain fatty acid transport protein 6 (619 aa).

Transmembrane regions (helical) follow at residues 22 to 42 (LLFP…LIII) and 119 to 139 (VHVW…NTNI). 221-232 (YIFTSGTTGLPK) serves as a coordination point for AMP.

The protein belongs to the ATP-dependent AMP-binding enzyme family. As to expression, strongly expressed in heart and localizes to cardiac myocytes. Expressed at moderate levels in placenta, testis, and adrenal glands. Expressed at very low levels in kidney, bladder and uterus.

The protein resides in the cell membrane. It is found in the sarcolemma. It carries out the reaction a fatty acid(in) = a fatty acid(out). It catalyses the reaction hexadecanoate(out) = hexadecanoate(in). The enzyme catalyses (9Z)-octadecenoate(out) = (9Z)-octadecenoate(in). The catalysed reaction is (9Z,12Z)-octadecadienoate(out) = (9Z,12Z)-octadecadienoate(in). It carries out the reaction a very long-chain fatty acid + ATP + CoA = a very long-chain fatty acyl-CoA + AMP + diphosphate. It catalyses the reaction tetracosanoate + ATP + CoA = tetracosanoyl-CoA + AMP + diphosphate. The enzyme catalyses a long-chain fatty acid + ATP + CoA = a long-chain fatty acyl-CoA + AMP + diphosphate. The catalysed reaction is (5Z,8Z,11Z,14Z)-eicosatetraenoate + ATP + CoA = (5Z,8Z,11Z,14Z)-eicosatetraenoyl-CoA + AMP + diphosphate. It carries out the reaction (9Z)-octadecenoate + ATP + CoA = (9Z)-octadecenoyl-CoA + AMP + diphosphate. Functionally, mediates the import of long-chain fatty acids (LCFA) into the cell by facilitating their transport at the plasma membrane. Also functions as an acyl-CoA ligase catalyzing the ATP-dependent formation of fatty acyl-CoA using LCFA and very-long-chain fatty acids (VLCFA) as substrates. Plays a pivotal role in regulating available LCFA substrates from exogenous sources in tissues undergoing high levels of beta-oxidation such as the heart. The sequence is that of Long-chain fatty acid transport protein 6 (SLC27A6) from Homo sapiens (Human).